The chain runs to 82 residues: Conotoxin MiK42 (82 aa).

The N-terminal stretch at 1-22 (MKLTCALIVAMLLLTACQLITT) is a signal peptide. The propeptide occupies 23–49 (DDFRGRQQYRTARSRTKMQNYKIFRLT). Disulfide bonds link cysteine 52/cysteine 67, cysteine 59/cysteine 70, and cysteine 66/cysteine 80.

This sequence belongs to the conotoxin O1 superfamily. As to expression, expressed by the venom duct.

Its subcellular location is the secreted. This Conus miles (Soldier cone) protein is Conotoxin MiK42.